The primary structure comprises 442 residues: Trigger factor (442 aa).

One can recognise a PPIase FKBP-type domain in the interval 163–248 (NDLVTINYCI…ILNVEEKQEN (86 aa)).

It belongs to the FKBP-type PPIase family. Tig subfamily.

Its subcellular location is the cytoplasm. It catalyses the reaction [protein]-peptidylproline (omega=180) = [protein]-peptidylproline (omega=0). Involved in protein export. Acts as a chaperone by maintaining the newly synthesized protein in an open conformation. Functions as a peptidyl-prolyl cis-trans isomerase. The polypeptide is Trigger factor (Buchnera aphidicola subsp. Schizaphis graminum (strain Sg)).